The primary structure comprises 227 residues: Eukaryotic translation initiation factor 4E-1 (227 aa).

The interval 1–52 is disordered; the sequence is MAEEHETRPPSAGRPPSSGRGRADDADEREEGEIADDDSGHAPPQANPAAPH. Residues 9-20 are compositionally biased toward low complexity; that stretch reads PPSAGRPPSSGR. The span at 25-37 shows a compositional bias: acidic residues; the sequence is DADEREEGEIADD. EIF4G-binding stretches follow at residues 52–55 and 62–98; these read HPLE and FDNP…NNIH. MRNA-binding positions include 70–75, Lys-102, and 120–121; these read KQATWG and WE. The cysteines at positions 125 and 163 are disulfide-linked. An EIF4G-binding region spans residues 146-155; sequence HTLLAMIGEQ. MRNA-binding positions include 170 to 175 and 215 to 219; these read RGKQER and KKMDK.

The protein belongs to the eukaryotic initiation factor 4E family. As to quaternary structure, EIF4F is a multi-subunit complex, the composition of which varies with external and internal environmental conditions. It is composed of at least EIF4A, EIF4E and EIF4G. EIF4E is also known to interact with other partners. In higher plants two isoforms of EIF4F have been identified, named isoform EIF4F and isoform EIF(iso)4F. Isoform EIF4F has subunits p220 and p26, whereas isoform EIF(iso)4F has subunits p82 and p28. In terms of processing, according to the redox status, the Cys-125-Cys-163 disulfide bridge may have a role in regulating protein function by affecting its ability to bind capped mRNA.

The protein resides in the nucleus. It is found in the cytoplasm. In terms of biological role, component of the protein complex eIF4F, which is involved in the recognition of the mRNA cap, ATP-dependent unwinding of 5'-terminal secondary structure and recruitment of mRNA to the ribosome. Recognizes and binds the 7-methylguanosine-containing mRNA cap during an early step in the initiation of protein synthesis and facilitates ribosome binding by inducing the unwinding of the mRNAs secondary structures. This chain is Eukaryotic translation initiation factor 4E-1, found in Oryza sativa subsp. japonica (Rice).